A 287-amino-acid chain; its full sequence is ATP synthase gamma chain (287 aa).

This sequence belongs to the ATPase gamma chain family. In terms of assembly, F-type ATPases have 2 components, CF(1) - the catalytic core - and CF(0) - the membrane proton channel. CF(1) has five subunits: alpha(3), beta(3), gamma(1), delta(1), epsilon(1). CF(0) has three main subunits: a, b and c. The F(1)F(0) complex interacts with SpoIIIJ and YqjG; YqgA is found in the same complex. Interacts with FloT.

It localises to the cell membrane. Its subcellular location is the membrane raft. Its function is as follows. Produces ATP from ADP in the presence of a proton gradient across the membrane. The gamma chain is believed to be important in regulating ATPase activity and the flow of protons through the CF(0) complex. The chain is ATP synthase gamma chain from Bacillus subtilis (strain 168).